The chain runs to 453 residues: uncharacterized protein (453 aa).

[4Fe-4S] cluster is bound by residues C74, C80, C83, and C162. Positions 286, 315, 336, and 384 each coordinate S-adenosyl-L-methionine. C411 functions as the Nucleophile in the catalytic mechanism.

The protein belongs to the class I-like SAM-binding methyltransferase superfamily. RNA M5U methyltransferase family.

This is an uncharacterized protein from Staphylococcus aureus (strain MW2).